A 379-amino-acid polypeptide reads, in one-letter code: 2-dehydropantoate 2-reductase (379 aa).

NADP(+)-binding positions include 13–18 (GLGAMG) and Asn-119. Asn-119 is a substrate binding site. Lys-224 (proton donor) is an active-site residue. 3 residues coordinate substrate: Asn-228, Asn-232, and Ser-316. Glu-328 provides a ligand contact to NADP(+).

Belongs to the ketopantoate reductase family.

The catalysed reaction is (R)-pantoate + NADP(+) = 2-dehydropantoate + NADPH + H(+). It functions in the pathway cofactor biosynthesis; (R)-pantothenate biosynthesis; (R)-pantoate from 3-methyl-2-oxobutanoate: step 2/2. Catalyzes the NADPH-dependent reduction of ketopantoate into pantoic acid. This Saccharomyces cerevisiae (strain ATCC 204508 / S288c) (Baker's yeast) protein is 2-dehydropantoate 2-reductase (PAN5).